Here is a 351-residue protein sequence, read N- to C-terminus: tRNA-specific 2-thiouridylase MnmA (351 aa).

6-13 serves as a coordination point for ATP; it reads ALSGGTDS. C96 (nucleophile) is an active-site residue. Cysteines 96 and 193 form a disulfide. Residue G120 participates in ATP binding. Residues 143 to 145 form an interaction with tRNA region; it reads KDQ. C193 (cysteine persulfide intermediate) is an active-site residue. Positions 298–299 are interaction with tRNA; sequence RY.

Belongs to the MnmA/TRMU family.

The protein localises to the cytoplasm. It carries out the reaction S-sulfanyl-L-cysteinyl-[protein] + uridine(34) in tRNA + AH2 + ATP = 2-thiouridine(34) in tRNA + L-cysteinyl-[protein] + A + AMP + diphosphate + H(+). Its function is as follows. Catalyzes the 2-thiolation of uridine at the wobble position (U34) of tRNA, leading to the formation of s(2)U34. The polypeptide is tRNA-specific 2-thiouridylase MnmA (Nitratidesulfovibrio vulgaris (strain DSM 19637 / Miyazaki F) (Desulfovibrio vulgaris)).